Reading from the N-terminus, the 361-residue chain is Chorismate synthase (361 aa).

Over residues 38 to 49 (EKDMQHDLDRRR) the composition is skewed to basic and acidic residues. Residues 38 to 58 (EKDMQHDLDRRRPGTSKYTTQ) form a disordered region. Arg48 is an NADP(+) binding site. FMN-binding positions include 125–127 (RSS), 238–239 (NA), Gly278, 293–297 (KPTSS), and Arg319.

The protein belongs to the chorismate synthase family. Homotetramer. FMNH2 serves as cofactor.

It catalyses the reaction 5-O-(1-carboxyvinyl)-3-phosphoshikimate = chorismate + phosphate. The protein operates within metabolic intermediate biosynthesis; chorismate biosynthesis; chorismate from D-erythrose 4-phosphate and phosphoenolpyruvate: step 7/7. Catalyzes the anti-1,4-elimination of the C-3 phosphate and the C-6 proR hydrogen from 5-enolpyruvylshikimate-3-phosphate (EPSP) to yield chorismate, which is the branch point compound that serves as the starting substrate for the three terminal pathways of aromatic amino acid biosynthesis. This reaction introduces a second double bond into the aromatic ring system. This chain is Chorismate synthase, found in Photobacterium profundum (strain SS9).